Reading from the N-terminus, the 580-residue chain is MAGLPVRDPAVDRSLRSVFVGNIPYEATEEQLKDIFSEVGPVVSFRLVYDRETGKPKGYGFCEYQDQETALSAMRNLNGREFSGRALRVDNAASEKNKEELKSLGTGAPVIESPYGESISPEDAPESISKAVASLPPEQMFELMKQMKLCVQNSPQEARNMLLQNPQLAYALLQAQVVMRIVDPEIALKILHRQTNIPTLISGNPQPVHVAGPGSGPNVSMNQQNPQAPQAQSLGGMHVNGAPPMMQASMPGGVPAPVQMAAAVGGPGPGSLAPAGVMQAQVGMQGAGPVPMERGQVPMQDPRAAMQRGALPTNVPTPRGLLGDAPNDPRGGTLMTVTGDVEPRAYLGPPPPPHQGPPMHHVPGHEGRGPPPHDMRGGPLAEPRPLMAEPRGPMLDQRGPPLDARGGRDPRGLDARGMEARAMEARGLDARGLEARAMEARAMEARAMEARAMEARAMEARAMEARGMDTRGPVPGPRGPMPSGIQGPNPMNMGAVVPQGSRQVPVMQGAGMQGASMQGGSQPGGFSPGQSQVTPQDHEKAALIMQVLQLTADQIAMLPPEQRQSILILKEQIQKSTGAP.

Ser14 bears the Phosphoserine mark. The RRM domain occupies 16–94 (RSVFVGNIPY…RALRVDNAAS (79 aa)). The interval 108-248 (APVIESPYGE…VNGAPPMMQA (141 aa)) is interactions with CSTF3 and SYMPK. A Glycyl lysine isopeptide (Lys-Gly) (interchain with G-Cter in SUMO2) cross-link involves residue Lys189. Arg308 carries the post-translational modification Omega-N-methylarginine. Disordered regions lie at residues 311 to 331 (LPTN…DPRG) and 347 to 414 (LGPP…RGLD). 2 stretches are compositionally biased toward basic and acidic residues: residues 363 to 376 (PGHE…HDMR) and 405 to 414 (RGGRDPRGLD). The 1; approximate repeat unit spans residues 413–417 (LDARG). Residues 413–472 (LDARGMEARAMEARGLDARGLEARAMEARAMEARAMEARAMEARAMEARAMEARGMDTRG) form a 12 X 5 AA tandem repeats of M-E-A-R-[AG] region. 2 consecutive repeat copies span residues 418-422 (MEARA) and 423-427 (MEARG). The 4; approximate repeat unit spans residues 428 to 432 (LDARG). One copy of the 5; approximate repeat lies at 433–437 (LEARA). Repeat copies occupy residues 438 to 442 (MEARA), 443 to 447 (MEARA), 448 to 452 (MEARA), 453 to 457 (MEARA), 458 to 462 (MEARA), and 463 to 467 (MEARG). A 12; approximate repeat occupies 468–472 (MDTRG). Arg471 and Arg478 each carry omega-N-methylarginine. Positions 512–536 (MQGASMQGGSQPGGFSPGQSQVTPQ) are disordered. The tract at residues 517–580 (MQGGSQPGGF…EQIQKSTGAP (64 aa)) is interaction with RPO2TC1. Phosphoserine is present on residues Ser521 and Ser527.

In terms of assembly, the CSTF complex is composed of CSTF1 (50 kDa subunit), CSTF2 (64 kDa subunit) and CSTF3 (77 kDa subunit). CSTF2 directly interacts with CSTF3, SYMPK and RPO2TC1. Interacts with HSF1 in heat-stressed cells. Interacts with CPSF2, CPSF3 and FIP1L1. Interacts with DDX1. As to expression, expressed in most somatic cell types (at protein level). Highly expressed in testis, except in meiotic spermatocytes.

It localises to the nucleus. Functionally, one of the multiple factors required for polyadenylation and 3'-end cleavage of mammalian pre-mRNAs. This subunit is directly involved in the binding to pre-mRNAs. The chain is Cleavage stimulation factor subunit 2 (Cstf2) from Mus musculus (Mouse).